Consider the following 266-residue polypeptide: Family of serine hydrolases 3 (266 aa).

Catalysis depends on charge relay system residues Ser117, Asp180, and His209.

It belongs to the AB hydrolase 3 family.

In terms of biological role, serine hydrolase of unknown specificity. The sequence is that of Family of serine hydrolases 3 (FSH3) from Saccharomyces cerevisiae (strain ATCC 204508 / S288c) (Baker's yeast).